A 118-amino-acid polypeptide reads, in one-letter code: Transcriptional regulator WhiB4 (118 aa).

Positions 36–92 constitute a 4Fe-4S Wbl-type domain; it reads LCRTTDPDELFVRGAAQRKAAVICRHCPVMQECAADALDNKVEFGVWGGMTERQRRA. 4 residues coordinate [4Fe-4S] cluster: cysteine 37, cysteine 59, cysteine 62, and cysteine 68. Intrachain disulfides connect cysteine 37–cysteine 68 and cysteine 59–cysteine 62.

The protein belongs to the WhiB family. [4Fe-4S] cluster serves as cofactor. In terms of processing, the Fe-S cluster can be nitrosylated by nitric oxide (NO). Post-translationally, upon Fe-S cluster removal intramolecular disulfide bonds are formed.

Its subcellular location is the cytoplasm. In terms of biological role, acts as a transcriptional regulator. Probably redox-responsive. The apo- but not holo-form probably binds DNA. The sequence is that of Transcriptional regulator WhiB4 (whiB4) from Mycobacterium tuberculosis (strain CDC 1551 / Oshkosh).